The sequence spans 256 residues: Trans-aconitate 2-methyltransferase (256 aa).

This sequence belongs to the methyltransferase superfamily. Tam family.

The protein resides in the cytoplasm. It catalyses the reaction trans-aconitate + S-adenosyl-L-methionine = (E)-3-(methoxycarbonyl)pent-2-enedioate + S-adenosyl-L-homocysteine. Catalyzes the S-adenosylmethionine monomethyl esterification of trans-aconitate. This is Trans-aconitate 2-methyltransferase from Rhodopseudomonas palustris (strain BisA53).